Here is a 1406-residue protein sequence, read N- to C-terminus: DNA-directed RNA polymerase subunit beta' (1406 aa).

Cys-70, Cys-72, Cys-85, and Cys-88 together coordinate Zn(2+). Positions 460, 462, and 464 each coordinate Mg(2+). The Zn(2+) site is built by Cys-814, Cys-889, Cys-896, and Cys-899.

It belongs to the RNA polymerase beta' chain family. In terms of assembly, the RNAP catalytic core consists of 2 alpha, 1 beta, 1 beta' and 1 omega subunit. When a sigma factor is associated with the core the holoenzyme is formed, which can initiate transcription. Mg(2+) serves as cofactor. The cofactor is Zn(2+).

The enzyme catalyses RNA(n) + a ribonucleoside 5'-triphosphate = RNA(n+1) + diphosphate. Its function is as follows. DNA-dependent RNA polymerase catalyzes the transcription of DNA into RNA using the four ribonucleoside triphosphates as substrates. This chain is DNA-directed RNA polymerase subunit beta', found in Psychromonas ingrahamii (strain DSM 17664 / CCUG 51855 / 37).